The primary structure comprises 396 residues: ATP-dependent RNA helicase eIF4A (396 aa).

The Q motif motif lies at 23-51; the sequence is DSFDEMNLKSELLRGIYAYGFERPSAIQQ. One can recognise a Helicase ATP-binding domain in the interval 54 to 224; it reads IMPVIKGHDV…TKFMRDPVRI (171 aa). Residue 67–74 participates in ATP binding; that stretch reads AQSGTGKT. The DEAD box motif lies at 172–175; that stretch reads DEAD. The 162-residue stretch at 235–396 folds into the Helicase C-terminal domain; the sequence is GIKQFYIAVE…EMPMNVADLI (162 aa).

The protein belongs to the DEAD box helicase family. eIF4A subfamily. In terms of assembly, component of the eIF4F complex, which composition varies with external and internal environmental conditions. It is composed of at least eIF4A, eIF4E and eIF4G.

Its subcellular location is the cytoplasm. It carries out the reaction ATP + H2O = ADP + phosphate + H(+). Its function is as follows. ATP-dependent RNA helicase which is a subunit of the eIF4F complex involved in cap recognition and is required for mRNA binding to ribosome. In the current model of translation initiation, eIF4A unwinds RNA secondary structures in the 5'-UTR of mRNAs which is necessary to allow efficient binding of the small ribosomal subunit, and subsequent scanning for the initiator codon. This chain is ATP-dependent RNA helicase eIF4A (TIF1), found in Pyricularia oryzae (strain 70-15 / ATCC MYA-4617 / FGSC 8958) (Rice blast fungus).